The sequence spans 171 residues: ATP synthase subunit b (171 aa).

A helical transmembrane segment spans residues 3–23 (KFLFFIFVFVGISFAGDDTAT).

This sequence belongs to the ATPase B chain family. F-type ATPases have 2 components, F(1) - the catalytic core - and F(0) - the membrane proton channel. F(1) has five subunits: alpha(3), beta(3), gamma(1), delta(1), epsilon(1). F(0) has three main subunits: a(1), b(2) and c(10-14). The alpha and beta chains form an alternating ring which encloses part of the gamma chain. F(1) is attached to F(0) by a central stalk formed by the gamma and epsilon chains, while a peripheral stalk is formed by the delta and b chains.

It localises to the cell inner membrane. In terms of biological role, f(1)F(0) ATP synthase produces ATP from ADP in the presence of a proton or sodium gradient. F-type ATPases consist of two structural domains, F(1) containing the extramembraneous catalytic core and F(0) containing the membrane proton channel, linked together by a central stalk and a peripheral stalk. During catalysis, ATP synthesis in the catalytic domain of F(1) is coupled via a rotary mechanism of the central stalk subunits to proton translocation. Component of the F(0) channel, it forms part of the peripheral stalk, linking F(1) to F(0). In Campylobacter hominis (strain ATCC BAA-381 / DSM 21671 / CCUG 45161 / LMG 19568 / NCTC 13146 / CH001A), this protein is ATP synthase subunit b.